The following is a 325-amino-acid chain: MKLFLRSHAVLILLFLLQGLFVFFYYWFAGLHSFSHLFYILGVQLLILAGYLAYRWYKDRGVYHWLSSGQEGTDIPYLGSSVFCSELYEKQMELIRLQHQKLHETEAKLDARVTYMNQWVHQVKTPLSVINLIIQEEDEPVFEQIKKEVRQIEFGLETLLYSSRLDLFERDFKIEAVSLSELLQSVIQSYKRFFIQYRVYPKMNVCDDHQIYTDAKWLKFAIGQVVTNAVKYSAGKSDRLELNVFCDEDRTVLEVKDYGVGIPSQDIKRVFDPYYTGENGRRFQESTGIGLHLVKEITDKLNHTVDISSSPGEGTSVRFSFLTKM.

The Cytoplasmic segment spans residues 1-8; sequence MKLFLRSH. A helical membrane pass occupies residues 9–29; it reads AVLILLFLLQGLFVFFYYWFA. Residues 30–33 lie on the Extracellular side of the membrane; that stretch reads GLHS. A helical membrane pass occupies residues 34–54; sequence FSHLFYILGVQLLILAGYLAY. Residues 55-325 are Cytoplasmic-facing; the sequence is RWYKDRGVYH…SVRFSFLTKM (271 aa). The region spanning 118–325 is the Histidine kinase domain; the sequence is QWVHQVKTPL…SVRFSFLTKM (208 aa). Residue histidine 121 is modified to Phosphohistidine; by autocatalysis.

The protein localises to the cell membrane. The catalysed reaction is ATP + protein L-histidine = ADP + protein N-phospho-L-histidine.. Its function is as follows. Probable member of the two-component regulatory system YxdK/YxdJ. May activate YxdJ in response to the antibacterial protein LL-37. In Bacillus subtilis (strain 168), this protein is Sensor histidine kinase YxdK (yxdK).